We begin with the raw amino-acid sequence, 122 residues long: Large ribosomal subunit protein uL14 (122 aa).

This sequence belongs to the universal ribosomal protein uL14 family. In terms of assembly, part of the 50S ribosomal subunit. Forms a cluster with proteins L3 and L19. In the 70S ribosome, L14 and L19 interact and together make contacts with the 16S rRNA in bridges B5 and B8.

Binds to 23S rRNA. Forms part of two intersubunit bridges in the 70S ribosome. The polypeptide is Large ribosomal subunit protein uL14 (Thermoanaerobacter pseudethanolicus (strain ATCC 33223 / 39E) (Clostridium thermohydrosulfuricum)).